The following is a 235-amino-acid chain: MATVQKSQHSHFFLLVGCIVHLSNFCSTTTAQFDYFKLVLQWPNSYCSLKTTHCPRTRLPSQFTIHGLWPDNKSWPLSNCRDTSADVLKITDKGLIQDLAVHWPDLTRRQRKVPGQKFWVTQWKKHGACALPMYSFNDYFVKALELKKRNNVLDMLSRKSLTPGDQRVDVSDVNGAITKVTGGIAILKCPEGYLTEVIICFDPSGFPVIDCPGPFPCKDDPLEFQVLSRRKFQDL.

An N-terminal signal peptide occupies residues 1–31 (MATVQKSQHSHFFLLVGCIVHLSNFCSTTTA). Glutamine 41 contributes to the RNA binding site. A disulfide bridge links cysteine 47 with cysteine 54. RNA is bound at residue histidine 66. The active-site Proton donor is the histidine 66. N-linked (GlcNAc...) asparagine glycosylation is present at asparagine 72. Disulfide bonds link cysteine 80–cysteine 129, cysteine 189–cysteine 217, and cysteine 200–cysteine 211. RNA-binding positions include 105–106 (DL), arginine 108, and phenylalanine 118. Glutamine 122 is an active-site residue. 125–126 (KH) provides a ligand contact to RNA. Residue histidine 126 is the Proton acceptor of the active site.

This sequence belongs to the RNase T2 family.

It is found in the secreted. The protein localises to the extracellular space. It catalyses the reaction a ribonucleotidyl-ribonucleotide-RNA + H2O = a 3'-end 3'-phospho-ribonucleotide-RNA + a 5'-end dephospho-ribonucleoside-RNA + H(+). Self-incompatibility (SI) is the inherited ability of a flowering plant to prevent self-fertilization by discriminating between self and non-self pollen during pollination. In many species, self-incompatibility is controlled by the single, multiallelic locus S. In Antirrhinum hispanicum (Snapdragon), this protein is Ribonuclease S-2 (S2).